Consider the following 678-residue polypeptide: Catalase (678 aa).

Basic and acidic residues predominate over residues 1 to 26 (MSNEREMQNKKDQQLESFRVEDEGKK). The interval 1-32 (MSNEREMQNKKDQQLESFRVEDEGKKLTTNQG) is disordered. Active-site residues include His75 and Asn148. Residue Tyr362 coordinates heme.

It belongs to the catalase family. HPII subfamily. Heme serves as cofactor.

It is found in the cytoplasm. It catalyses the reaction 2 H2O2 = O2 + 2 H2O. In terms of biological role, decomposes hydrogen peroxide into water and oxygen; serves to protect cells from the toxic effects of hydrogen peroxide. The chain is Catalase (katE) from Alkalihalophilus pseudofirmus (strain ATCC BAA-2126 / JCM 17055 / OF4) (Bacillus pseudofirmus).